The sequence spans 200 residues: 3-isopropylmalate dehydratase small subunit (200 aa).

The protein belongs to the LeuD family. LeuD type 1 subfamily. As to quaternary structure, heterodimer of LeuC and LeuD.

The enzyme catalyses (2R,3S)-3-isopropylmalate = (2S)-2-isopropylmalate. The protein operates within amino-acid biosynthesis; L-leucine biosynthesis; L-leucine from 3-methyl-2-oxobutanoate: step 2/4. Functionally, catalyzes the isomerization between 2-isopropylmalate and 3-isopropylmalate, via the formation of 2-isopropylmaleate. This is 3-isopropylmalate dehydratase small subunit from Histophilus somni (strain 129Pt) (Haemophilus somnus).